The chain runs to 166 residues: Small ribosomal subunit protein uS3m (166 aa).

The N-terminal 25 residues, 1–25 (MLRSLQHVESHINQCRRISTTSTLL), are a transit peptide targeting the mitochondrion.

Belongs to the universal ribosomal protein uS3 family. As to quaternary structure, component of the mitochondrial ribosome small subunit (28S) which comprises a 12S rRNA and about 30 distinct proteins.

It is found in the mitochondrion. This is Small ribosomal subunit protein uS3m (mrps-24) from Caenorhabditis briggsae.